The primary structure comprises 415 residues: UDP-N-acetylglucosamine 1-carboxyvinyltransferase (415 aa).

22–23 (KN) is a phosphoenolpyruvate binding site. Residue arginine 92 participates in UDP-N-acetyl-alpha-D-glucosamine binding. Cysteine 116 (proton donor) is an active-site residue. Position 116 is a 2-(S-cysteinyl)pyruvic acid O-phosphothioketal (cysteine 116). UDP-N-acetyl-alpha-D-glucosamine is bound by residues 121–125 (RPIDL), aspartate 304, and valine 326.

It belongs to the EPSP synthase family. MurA subfamily.

The protein resides in the cytoplasm. The enzyme catalyses phosphoenolpyruvate + UDP-N-acetyl-alpha-D-glucosamine = UDP-N-acetyl-3-O-(1-carboxyvinyl)-alpha-D-glucosamine + phosphate. Its pathway is cell wall biogenesis; peptidoglycan biosynthesis. In terms of biological role, cell wall formation. Adds enolpyruvyl to UDP-N-acetylglucosamine. The sequence is that of UDP-N-acetylglucosamine 1-carboxyvinyltransferase from Halothermothrix orenii (strain H 168 / OCM 544 / DSM 9562).